The chain runs to 147 residues: Large ribosomal subunit protein bL9 (147 aa).

The protein belongs to the bacterial ribosomal protein bL9 family.

In terms of biological role, binds to the 23S rRNA. In Citrifermentans bemidjiense (strain ATCC BAA-1014 / DSM 16622 / JCM 12645 / Bem) (Geobacter bemidjiensis), this protein is Large ribosomal subunit protein bL9.